Here is a 210-residue protein sequence, read N- to C-terminus: LexA repressor (210 aa).

Positions 30-50 (RVEIAREIGFKSPNAAEEHLK) form a DNA-binding region, H-T-H motif. Residues Ser-127 and Lys-164 each act as for autocatalytic cleavage activity in the active site.

The protein belongs to the peptidase S24 family. In terms of assembly, homodimer.

It catalyses the reaction Hydrolysis of Ala-|-Gly bond in repressor LexA.. In terms of biological role, represses a number of genes involved in the response to DNA damage (SOS response), including recA and lexA. In the presence of single-stranded DNA, RecA interacts with LexA causing an autocatalytic cleavage which disrupts the DNA-binding part of LexA, leading to derepression of the SOS regulon and eventually DNA repair. In Actinobacillus pleuropneumoniae serotype 7 (strain AP76), this protein is LexA repressor.